Consider the following 168-residue polypeptide: Photosystem I assembly protein Ycf3 (168 aa).

3 TPR repeats span residues 35-68 (AFTY…EIDP), 72-105 (SYIL…NPFL), and 120-153 (GEQA…TPGN).

Belongs to the Ycf3 family.

It is found in the plastid. Its subcellular location is the chloroplast thylakoid membrane. Functionally, essential for the assembly of the photosystem I (PSI) complex. May act as a chaperone-like factor to guide the assembly of the PSI subunits. This is Photosystem I assembly protein Ycf3 from Atropa belladonna (Belladonna).